Consider the following 352-residue polypeptide: Carbohydrate sulfotransferase 11 (352 aa).

At 1 to 16 the chain is on the cytoplasmic side; the sequence is MKPALLEVMRMNRICR. The helical; Signal-anchor for type II membrane protein transmembrane segment at 17 to 37 threads the bilayer; that stretch reads MVLATCLGSFILVIFYFQSML. Residues 38–352 are Lumenal-facing; the sequence is HPVMRRNPFG…YSVPNYLKLD (315 aa). 3'-phosphoadenylyl sulfate contacts are provided by residues 124 to 130 and 186 to 194; these read PKVACTN and REPFERLVS. N-linked (GlcNAc...) asparagine glycosylation is found at N205, N223, N321, and N342.

This sequence belongs to the sulfotransferase 2 family. N-glycosylated; required for activity and stability.

Its subcellular location is the golgi apparatus membrane. The catalysed reaction is chondroitin beta-D-glucuronate + n 3'-phosphoadenylyl sulfate = chondroitin 4'-sulfate + n adenosine 3',5'-bisphosphate + n H(+). In terms of biological role, catalyzes the transfer of sulfate to position 4 of the N-acetylgalactosamine (GalNAc) residue of chondroitin. Chondroitin sulfate constitutes the predominant proteoglycan present in cartilage and is distributed on the surfaces of many cells and extracellular matrices. Can also sulfate Gal residues in desulfated dermatan sulfate. Preferentially sulfates in GlcA-&gt;GalNAc unit than in IdoA-&gt;GalNAc unit. Does not form 4, 6-di-O-sulfated GalNAc when chondroitin sulfate C is used as an acceptor. The chain is Carbohydrate sulfotransferase 11 (Chst11) from Rattus norvegicus (Rat).